The chain runs to 330 residues: Beta-ketoacyl-[acyl-carrier-protein] synthase III (330 aa).

Residues Cys-111 and His-249 contribute to the active site. An ACP-binding region spans residues Gln-250–Arg-254. Asn-279 is an active-site residue.

The protein belongs to the thiolase-like superfamily. FabH family. As to quaternary structure, homodimer.

Its subcellular location is the cytoplasm. It carries out the reaction malonyl-[ACP] + acetyl-CoA + H(+) = 3-oxobutanoyl-[ACP] + CO2 + CoA. The protein operates within lipid metabolism; fatty acid biosynthesis. Catalyzes the condensation reaction of fatty acid synthesis by the addition to an acyl acceptor of two carbons from malonyl-ACP. Catalyzes the first condensation reaction which initiates fatty acid synthesis and may therefore play a role in governing the total rate of fatty acid production. Possesses both acetoacetyl-ACP synthase and acetyl transacylase activities. Its substrate specificity determines the biosynthesis of branched-chain and/or straight-chain of fatty acids. The polypeptide is Beta-ketoacyl-[acyl-carrier-protein] synthase III (Pseudomonas aeruginosa (strain LESB58)).